The chain runs to 629 residues: ATP-dependent DNA helicase II subunit 2 (629 aa).

Residues 254–476 (SGLNRKTAVE…GHQIDELMEQ (223 aa)) enclose the Ku domain. The segment covering 608 to 620 (DLETLLKRGEQHS) has biased composition (basic and acidic residues). The disordered stretch occupies residues 608–629 (DLETLLKRGEQHSRGSPNNSNN).

The protein belongs to the ku80 family. As to quaternary structure, heterodimer of YKU70/HDF1 and YKU80/HDF2. Interacts with SIR4.

The protein localises to the nucleus. It localises to the chromosome. It is found in the telomere. The catalysed reaction is ATP + H2O = ADP + phosphate + H(+). In terms of biological role, single-stranded DNA-dependent ATP-dependent helicase. Involved in non-homologous end joining (NHEJ) DNA double strand break repair. DNA-binding is sequence-independent but has a high affinity to nicks in double-stranded DNA and to the ends of duplex DNA. Binds to naturally occurring chromosomal ends, and therefore provides chromosomal end protection. Appears to have a role in recruitment of telomerase and CDC13 to the telomere and the subsequent telomere elongation. Required also for telomere recombination to repair telomeric ends in the absence of telomerase. KU70, of the KU70/KU80 heterodimer, binds to the stem loop of TLC1, the RNA component of telomerase. Involved in telomere maintenance. Interacts with telomeric repeats and subtelomeric sequences thereby controlling telomere length and protecting against subtelomeric rearrangement. Maintains telomeric chromatin, which is involved in silencing the expression of genes located at the telomere. Required for mating-type switching. The polypeptide is ATP-dependent DNA helicase II subunit 2 (YKU80) (Saccharomyces cerevisiae (strain ATCC 204508 / S288c) (Baker's yeast)).